The following is a 50-amino-acid chain: Large ribosomal subunit protein bL33B (50 aa).

Belongs to the bacterial ribosomal protein bL33 family.

The sequence is that of Large ribosomal subunit protein bL33B from Metamycoplasma arthritidis (strain 158L3-1) (Mycoplasma arthritidis).